Consider the following 362-residue polypeptide: Phosphoserine aminotransferase (362 aa).

Arg-42 provides a ligand contact to L-glutamate. Pyridoxal 5'-phosphate contacts are provided by residues 76 to 77 (AR), Trp-102, Thr-153, Asp-174, and Gln-197. Position 198 is an N6-(pyridoxal phosphate)lysine (Lys-198). Pyridoxal 5'-phosphate is bound at residue 239-240 (NT).

This sequence belongs to the class-V pyridoxal-phosphate-dependent aminotransferase family. SerC subfamily. In terms of assembly, homodimer. Requires pyridoxal 5'-phosphate as cofactor.

Its subcellular location is the cytoplasm. It carries out the reaction O-phospho-L-serine + 2-oxoglutarate = 3-phosphooxypyruvate + L-glutamate. The enzyme catalyses 4-(phosphooxy)-L-threonine + 2-oxoglutarate = (R)-3-hydroxy-2-oxo-4-phosphooxybutanoate + L-glutamate. The protein operates within amino-acid biosynthesis; L-serine biosynthesis; L-serine from 3-phospho-D-glycerate: step 2/3. It participates in cofactor biosynthesis; pyridoxine 5'-phosphate biosynthesis; pyridoxine 5'-phosphate from D-erythrose 4-phosphate: step 3/5. In terms of biological role, catalyzes the reversible conversion of 3-phosphohydroxypyruvate to phosphoserine and of 3-hydroxy-2-oxo-4-phosphonooxybutanoate to phosphohydroxythreonine. The chain is Phosphoserine aminotransferase from Proteus mirabilis (strain HI4320).